We begin with the raw amino-acid sequence, 103 residues long: Large ribosomal subunit protein bL21 (103 aa).

The protein belongs to the bacterial ribosomal protein bL21 family. As to quaternary structure, part of the 50S ribosomal subunit. Contacts protein L20.

In terms of biological role, this protein binds to 23S rRNA in the presence of protein L20. The sequence is that of Large ribosomal subunit protein bL21 from Borreliella burgdorferi (strain ZS7) (Borrelia burgdorferi).